A 333-amino-acid polypeptide reads, in one-letter code: Atrochrysone carboxyl ACP thioesterase (333 aa).

Residues His104, His106, Asp108, and His109 each contribute to the Zn(2+) site. Asp108 functions as the Proton donor/acceptor in the catalytic mechanism.

Belongs to the metallo-beta-lactamase superfamily. The cofactor is Zn(2+).

The catalysed reaction is atrochrysone carboxyl-[ACP] + H2O = atrochrysone carboxylate + holo-[ACP] + H(+). It participates in pigment biosynthesis. Atrochrysone carboxyl ACP thioesterase; part of the gene cluster that mediates the biosynthesis of the bianthraquinone cladofulvin, a conidial pigment not required for virulence but that plays a role in fitness and resistance to environmental stresses including UV light and low-temperature stress. The pathway begins with the synthesis of atrochrysone thioester by the polyketide synthase (PKS) claG. The atrochrysone carboxyl ACP thioesterase claF then breaks the thioester bond and releases the atrochrysone carboxylic acid from claG. This compound is decarboxylated by claH to yield emodin, which is further converted to chrysophanol hydroquinone by the reductase claC and the dehydratase claB. The cytochrome P450 monooxygenase claM then catalyzes the dimerization of nataloe-emodin to cladofulvin. The protein is Atrochrysone carboxyl ACP thioesterase of Passalora fulva (Tomato leaf mold).